The following is a 169-amino-acid chain: Translocator protein (169 aa).

At 2-5 (APPW) the chain is on the mitochondrial intermembrane side. Residues 6–26 (VPAMGFTLAPSLGCFVGSRFV) form a helical membrane-spanning segment. Residues 27–46 (HGEGLRWYAGLQKPSWHPPH) lie on the Cytoplasmic side of the membrane. The helical transmembrane segment at 47–67 (WVLGPVWGTLYSAMGYGSYLV) threads the bilayer. At 68 to 79 (WKELGGFTEKAV) the chain is on the mitochondrial intermembrane side. The helical transmembrane segment at 80–100 (VPLGLYTGQLALNWAWPPIFF) threads the bilayer. Residues 101-105 (GARQM) lie on the Cytoplasmic side of the membrane. A helical transmembrane segment spans residues 106-126 (GWALVDLLLVSGAAAATTVAW). The Mitochondrial intermembrane segment spans residues 127–134 (YQVSPLAA). Residues 135–155 (RLLYPYLAWLAFTTTLNYCVW) traverse the membrane as a helical segment. The Cytoplasmic segment spans residues 156–169 (RDNHGWRGGRRLPE).

Belongs to the TspO/BZRP family. In terms of assembly, interacts with TSPOAP1. May interact with STAR. Interacts with MOST-1. Interacts with TMEM97. Forms a complex with TMEM97 and PGRMC1; the interaction occurs in MIA PaCa-2 cells but not in MCF7 cells. In terms of tissue distribution, found in many tissue types. Expressed at the highest levels under normal conditions in tissues that synthesize steroids.

The protein resides in the mitochondrion membrane. Can bind protoporphyrin IX and may play a role in the transport of porphyrins and heme. Promotes the transport of cholesterol across mitochondrial membranes and may play a role in lipid metabolism, but its precise physiological role is controversial. It is apparently not required for steroid hormone biosynthesis. Was initially identified as peripheral-type benzodiazepine receptor; can also bind isoquinoline carboxamides. This is Translocator protein (TSPO) from Homo sapiens (Human).